Consider the following 136-residue polypeptide: Large ribosomal subunit protein uL16c (136 aa).

The protein belongs to the universal ribosomal protein uL16 family. Part of the 50S ribosomal subunit.

The protein resides in the plastid. The protein localises to the chloroplast. The protein is Large ribosomal subunit protein uL16c of Zea mays (Maize).